Consider the following 399-residue polypeptide: Keratin, type I cytoskeletal 19 (399 aa).

The head stretch occupies residues methionine 1–asparagine 78. Arginine 7 carries the post-translational modification Omega-N-methylarginine. A phosphoserine mark is found at serine 14 and serine 22. Asymmetric dimethylarginine; alternate is present on arginine 24. Arginine 24 carries the omega-N-methylarginine; alternate modification. Residue arginine 32 is modified to Omega-N-methylarginine. Residues serine 35 and serine 40 each carry the phosphoserine modification. 2 positions are modified to omega-N-methylarginine: arginine 43 and arginine 51. Serine 57 and serine 71 each carry phosphoserine. The coil 1A stretch occupies residues glutamate 79 to tryptophan 114. The region spanning glutamate 79 to phenylalanine 390 is the IF rod domain. Positions tyrosine 115–threonine 132 are linker 1. Residues isoleucine 133 to leucine 224 form a coil 1B region. Residues lysine 225–isoleucine 247 form a linker 12 region. The necessary for interaction with PNN stretch occupies residues aspartate 243–tyrosine 389. The coil 2 stretch occupies residues leucine 248–glutamine 386. Threonine 322 is modified (phosphothreonine). Residues aspartate 387–leucine 399 form a rod-like helical tail region. At serine 394 the chain carries Phosphoserine.

The protein belongs to the intermediate filament family. Heterotetramer of two type I and two type II keratins. Interacts with PNN and the actin-binding domain of DMD.

Involved in the organization of myofibers. Together with KRT8, helps to link the contractile apparatus to dystrophin at the costameres of striated muscle. The polypeptide is Keratin, type I cytoskeletal 19 (KRT19) (Bos taurus (Bovine)).